We begin with the raw amino-acid sequence, 1229 residues long: uncharacterized protein (1229 aa).

The first 19 residues, 1–19 (MKYFLLLFLLVLSFTLVES), serve as a signal peptide directing secretion. Residues Asn238, Asn270, Asn370, Asn538, Asn691, and Asn701 are each glycosylated (N-linked (GlcNAc...) asparagine). The region spanning 678–813 (RMVNFANVME…QWNIDTVKMN (136 aa)) is the Galectin 1 domain. The segment covering 818–829 (HTTTVEPSTPLE) has biased composition (polar residues). The disordered stretch occupies residues 818–903 (HTTTVEPSTP…TLPPTTTPYN (86 aa)). Residues 830–846 (TASTSQSTPSATLTSTT) are compositionally biased toward low complexity. Positions 847–869 (ENIPSTSKIPETSTTQRPTSPIL) are enriched in polar residues. Residues 870–901 (TSGATSTSSSTESTTTSPTTSTTTTLPPTTTP) show a composition bias toward low complexity. N-linked (GlcNAc...) asparagine glycans are attached at residues Asn903, Asn938, and Asn948. The Galectin 2 domain maps to 925–1059 (RPVVFSRYME…ESTIDTVSMA (135 aa)). Residues 1061 to 1087 (VRPPTTPTTTTSTTTTTTPKLTTTSTL) form a disordered region. A compositionally biased stretch (low complexity) spans 1067 to 1087 (PTTTTSTTTTTTPKLTTTSTL). Asn1146 carries N-linked (GlcNAc...) asparagine glycosylation.

This is an uncharacterized protein from Caenorhabditis elegans.